Consider the following 543-residue polypeptide: Cysteine/serine-rich nuclear protein 2 (543 aa).

Met1 is subject to N-acetylmethionine. Disordered stretches follow at residues 1–51 (MDAF…SFTP), 281–305 (KRQVSRPAAPDEEPSPTASCSLTGA), and 488–543 (DCNP…PLAV). Residues 31–40 (SSDSADSCDS) show a composition bias toward low complexity. Polar residues-rich tracts occupy residues 42 to 51 (NPPTTASFTP) and 296 to 305 (PTASCSLTGA).

Belongs to the AXUD1 family.

Its subcellular location is the nucleus. Binds to the consensus sequence 5'-AGAGTG-3' and has transcriptional activator activity. May play a role in apoptosis. This Homo sapiens (Human) protein is Cysteine/serine-rich nuclear protein 2 (CSRNP2).